Consider the following 155-residue polypeptide: 3-hydroxyacyl-[acyl-carrier-protein] dehydratase FabZ (155 aa).

The active site involves His-61.

This sequence belongs to the thioester dehydratase family. FabZ subfamily.

The protein localises to the cytoplasm. It catalyses the reaction a (3R)-hydroxyacyl-[ACP] = a (2E)-enoyl-[ACP] + H2O. In terms of biological role, involved in unsaturated fatty acids biosynthesis. Catalyzes the dehydration of short chain beta-hydroxyacyl-ACPs and long chain saturated and unsaturated beta-hydroxyacyl-ACPs. This chain is 3-hydroxyacyl-[acyl-carrier-protein] dehydratase FabZ, found in Synechococcus elongatus (strain ATCC 33912 / PCC 7942 / FACHB-805) (Anacystis nidulans R2).